The primary structure comprises 290 residues: Light-independent protochlorophyllide reductase iron-sulfur ATP-binding protein (290 aa).

Residues 34-39 (GIGKST) and K63 each bind ATP. A Mg(2+)-binding site is contributed by S38. Residues C119 and C153 each contribute to the [4Fe-4S] cluster site. Residues 204–205 (NR) and 228–230 (PDL) contribute to the ATP site.

It belongs to the NifH/BchL/ChlL family. In terms of assembly, homodimer. Protochlorophyllide reductase is composed of three subunits; BchL, BchN and BchB. Requires [4Fe-4S] cluster as cofactor.

It catalyses the reaction chlorophyllide a + oxidized 2[4Fe-4S]-[ferredoxin] + 2 ADP + 2 phosphate = protochlorophyllide a + reduced 2[4Fe-4S]-[ferredoxin] + 2 ATP + 2 H2O. Its pathway is porphyrin-containing compound metabolism; bacteriochlorophyll biosynthesis (light-independent). Its function is as follows. Component of the dark-operative protochlorophyllide reductase (DPOR) that uses Mg-ATP and reduced ferredoxin to reduce ring D of protochlorophyllide (Pchlide) to form chlorophyllide a (Chlide). This reaction is light-independent. The L component serves as a unique electron donor to the NB-component of the complex, and binds Mg-ATP. In Rhodospirillum rubrum, this protein is Light-independent protochlorophyllide reductase iron-sulfur ATP-binding protein.